A 404-amino-acid chain; its full sequence is Probable tRNA sulfurtransferase (404 aa).

The THUMP domain occupies 60–165; that stretch reads TAVAESLKQV…EEAAYLSYET (106 aa). Residues 183–184, 208–209, Arg-265, Gly-287, and Gln-296 contribute to the ATP site; these read ML and HF.

It belongs to the ThiI family.

It localises to the cytoplasm. The enzyme catalyses [ThiI sulfur-carrier protein]-S-sulfanyl-L-cysteine + a uridine in tRNA + 2 reduced [2Fe-2S]-[ferredoxin] + ATP + H(+) = [ThiI sulfur-carrier protein]-L-cysteine + a 4-thiouridine in tRNA + 2 oxidized [2Fe-2S]-[ferredoxin] + AMP + diphosphate. It catalyses the reaction [ThiS sulfur-carrier protein]-C-terminal Gly-Gly-AMP + S-sulfanyl-L-cysteinyl-[cysteine desulfurase] + AH2 = [ThiS sulfur-carrier protein]-C-terminal-Gly-aminoethanethioate + L-cysteinyl-[cysteine desulfurase] + A + AMP + 2 H(+). It participates in cofactor biosynthesis; thiamine diphosphate biosynthesis. Catalyzes the ATP-dependent transfer of a sulfur to tRNA to produce 4-thiouridine in position 8 of tRNAs, which functions as a near-UV photosensor. Also catalyzes the transfer of sulfur to the sulfur carrier protein ThiS, forming ThiS-thiocarboxylate. This is a step in the synthesis of thiazole, in the thiamine biosynthesis pathway. The sulfur is donated as persulfide by IscS. The polypeptide is Probable tRNA sulfurtransferase (Streptococcus pneumoniae serotype 19F (strain G54)).